The following is a 460-amino-acid chain: Bifunctional protein GlmU (460 aa).

Residues 1-232 (MENVAAIILA…SDEIMGVNDR (232 aa)) form a pyrophosphorylase region. UDP-N-acetyl-alpha-D-glucosamine-binding positions include 9–12 (LAAG), Lys-23, Gln-75, and 80–81 (GT). Asp-105 provides a ligand contact to Mg(2+). The UDP-N-acetyl-alpha-D-glucosamine site is built by Gly-142, Glu-157, Asn-172, and Asn-230. Asn-230 serves as a coordination point for Mg(2+). Residues 233 to 253 (AQLAQAARILRRRINRDLMLS) form a linker region. Residues 254-460 (GVSLVDPEQT…GWRIRMKKKT (207 aa)) form an N-acetyltransferase region. Residues Arg-336 and Lys-354 each coordinate UDP-N-acetyl-alpha-D-glucosamine. His-366 serves as the catalytic Proton acceptor. UDP-N-acetyl-alpha-D-glucosamine is bound by residues Tyr-369 and Asn-380. Residues 389–390 (NY), Ser-408, Ala-426, and Arg-443 contribute to the acetyl-CoA site.

In the N-terminal section; belongs to the N-acetylglucosamine-1-phosphate uridyltransferase family. This sequence in the C-terminal section; belongs to the transferase hexapeptide repeat family. As to quaternary structure, homotrimer. The cofactor is Mg(2+).

It localises to the cytoplasm. The catalysed reaction is alpha-D-glucosamine 1-phosphate + acetyl-CoA = N-acetyl-alpha-D-glucosamine 1-phosphate + CoA + H(+). The enzyme catalyses N-acetyl-alpha-D-glucosamine 1-phosphate + UTP + H(+) = UDP-N-acetyl-alpha-D-glucosamine + diphosphate. It functions in the pathway nucleotide-sugar biosynthesis; UDP-N-acetyl-alpha-D-glucosamine biosynthesis; N-acetyl-alpha-D-glucosamine 1-phosphate from alpha-D-glucosamine 6-phosphate (route II): step 2/2. Its pathway is nucleotide-sugar biosynthesis; UDP-N-acetyl-alpha-D-glucosamine biosynthesis; UDP-N-acetyl-alpha-D-glucosamine from N-acetyl-alpha-D-glucosamine 1-phosphate: step 1/1. The protein operates within bacterial outer membrane biogenesis; LPS lipid A biosynthesis. Its function is as follows. Catalyzes the last two sequential reactions in the de novo biosynthetic pathway for UDP-N-acetylglucosamine (UDP-GlcNAc). The C-terminal domain catalyzes the transfer of acetyl group from acetyl coenzyme A to glucosamine-1-phosphate (GlcN-1-P) to produce N-acetylglucosamine-1-phosphate (GlcNAc-1-P), which is converted into UDP-GlcNAc by the transfer of uridine 5-monophosphate (from uridine 5-triphosphate), a reaction catalyzed by the N-terminal domain. The protein is Bifunctional protein GlmU of Pelobacter propionicus (strain DSM 2379 / NBRC 103807 / OttBd1).